The sequence spans 430 residues: UDP-N-acetylglucosamine 1-carboxyvinyltransferase (430 aa).

Phosphoenolpyruvate is bound at residue 22–23 (KN). Arginine 102 serves as a coordination point for UDP-N-acetyl-alpha-D-glucosamine. Cysteine 126 functions as the Proton donor in the catalytic mechanism. A 2-(S-cysteinyl)pyruvic acid O-phosphothioketal modification is found at cysteine 126. UDP-N-acetyl-alpha-D-glucosamine is bound by residues 131-135 (RPVDL), 172-175 (KVSV), aspartate 317, and isoleucine 339.

This sequence belongs to the EPSP synthase family. MurA subfamily.

It is found in the cytoplasm. The catalysed reaction is phosphoenolpyruvate + UDP-N-acetyl-alpha-D-glucosamine = UDP-N-acetyl-3-O-(1-carboxyvinyl)-alpha-D-glucosamine + phosphate. It participates in cell wall biogenesis; peptidoglycan biosynthesis. In terms of biological role, cell wall formation. Adds enolpyruvyl to UDP-N-acetylglucosamine. The sequence is that of UDP-N-acetylglucosamine 1-carboxyvinyltransferase from Rhizobium etli (strain ATCC 51251 / DSM 11541 / JCM 21823 / NBRC 15573 / CFN 42).